The primary structure comprises 488 residues: UDP-glycosyltransferase 85A3 (488 aa).

Residues serine 306, cysteine 363 to glutamine 365, histidine 380 to glutamate 388, and phenylalanine 402 to glutamine 405 each bind UDP-alpha-D-glucose.

Belongs to the UDP-glycosyltransferase family. Expressed in roots and flowers.

This is UDP-glycosyltransferase 85A3 (UGT85A3) from Arabidopsis thaliana (Mouse-ear cress).